Here is a 372-residue protein sequence, read N- to C-terminus: Chaperone protein DnaJ (372 aa).

The 66-residue stretch at 3 to 68 (NLYEILEVNE…EKRKKYDMYG (66 aa)) folds into the J domain. The CR-type zinc finger occupies 130 to 212 (GTKKEISYKK…CKGKGYEIER (83 aa)). Positions 143, 146, 160, 163, 186, 189, 200, and 203 each coordinate Zn(2+). CXXCXGXG motif repeat units lie at residues 143 to 150 (CHVCNGDG), 160 to 167 (CEKCHGTG), 186 to 193 (CDKCHGEG), and 200 to 207 (CENCKGKG).

This sequence belongs to the DnaJ family. Homodimer. It depends on Zn(2+) as a cofactor.

The protein localises to the cytoplasm. Its function is as follows. Participates actively in the response to hyperosmotic and heat shock by preventing the aggregation of stress-denatured proteins and by disaggregating proteins, also in an autonomous, DnaK-independent fashion. Unfolded proteins bind initially to DnaJ; upon interaction with the DnaJ-bound protein, DnaK hydrolyzes its bound ATP, resulting in the formation of a stable complex. GrpE releases ADP from DnaK; ATP binding to DnaK triggers the release of the substrate protein, thus completing the reaction cycle. Several rounds of ATP-dependent interactions between DnaJ, DnaK and GrpE are required for fully efficient folding. Also involved, together with DnaK and GrpE, in the DNA replication of plasmids through activation of initiation proteins. The chain is Chaperone protein DnaJ from Finegoldia magna (strain ATCC 29328 / DSM 20472 / WAL 2508) (Peptostreptococcus magnus).